The primary structure comprises 86 residues: Exodeoxyribonuclease 7 small subunit (86 aa).

The protein belongs to the XseB family. In terms of assembly, heterooligomer composed of large and small subunits.

Its subcellular location is the cytoplasm. The enzyme catalyses Exonucleolytic cleavage in either 5'- to 3'- or 3'- to 5'-direction to yield nucleoside 5'-phosphates.. Bidirectionally degrades single-stranded DNA into large acid-insoluble oligonucleotides, which are then degraded further into small acid-soluble oligonucleotides. The protein is Exodeoxyribonuclease 7 small subunit of Xanthomonas euvesicatoria pv. vesicatoria (strain 85-10) (Xanthomonas campestris pv. vesicatoria).